A 732-amino-acid chain; its full sequence is Non-structural protein 4 (732 aa).

Polar residues-rich tracts occupy residues 13 to 23 (KNKGIQQNQWH) and 31 to 56 (LSGQ…NSKS). Disordered stretches follow at residues 13–74 (KNKG…NSAA) and 706–732 (LGRN…KQKE). A compositionally biased stretch (acidic residues) spans 719–732 (QVEEAENEEEKQKE).

In Catharanthus roseus (Madagascar periwinkle), this protein is Non-structural protein 4.